The primary structure comprises 602 residues: Elongation factor 4 (602 aa).

One can recognise a tr-type G domain in the interval 8 to 189 (KNIRNFSIIA…KIITTIPAPS (182 aa)). GTP-binding positions include 20–25 (DHGKST) and 136–139 (NKID).

It belongs to the TRAFAC class translation factor GTPase superfamily. Classic translation factor GTPase family. LepA subfamily.

The protein resides in the cell inner membrane. The catalysed reaction is GTP + H2O = GDP + phosphate + H(+). Its function is as follows. Required for accurate and efficient protein synthesis under certain stress conditions. May act as a fidelity factor of the translation reaction, by catalyzing a one-codon backward translocation of tRNAs on improperly translocated ribosomes. Back-translocation proceeds from a post-translocation (POST) complex to a pre-translocation (PRE) complex, thus giving elongation factor G a second chance to translocate the tRNAs correctly. Binds to ribosomes in a GTP-dependent manner. This chain is Elongation factor 4, found in Helicobacter pylori (strain G27).